The chain runs to 666 residues: MFLKLFLLLSLVSFSHSDSSSTVSCPNGTDFHQLTTVFRYVSGFNSSWFSSNCSAVITHVVLPSRKLNGTVSWNPIRNLTRLRVLDLSNNSLDGSLPTWLWSMPGLVSVNLSRNRFGGSIRVIPVNGSVLSAVKELNLSFNRFKHAVNFTGFTNLTTLDLSHNSLGVLPLGLGSLSGLRHLDISRCKINGSVKPISGLKSLDYLDLSENSMNGSFPVDFPNLNHLQFLNLSANRFSGSVGFDKYRKFGKSAFLHGGDFVFNDSKIPYHHRIHRLPHRHPPPVRQRNVKTHRTNHTPLVIGLSSSLGALIIVIFAAAIILIRRRMKSARTKSRWAISNPTPLDFKMEKSGPFEFGTESGSSWVADIKEPTAAPVVMASKPLMNLTFKDLIVATSHFGTESVISDGTCGPLYRAVLPGDLHVAIKVLERIRDVDQNDAVTAFEALTRLKHPNLLTLSGYCIAGKEKLILYEFMANGDLHRWLHELPAGETNVEDWSADTWESHVGDSSPEKTNWLIRHRIAIGVARGLAYLHHVGTTHGHLVATNILLTETLEPRISDFGINNIARTGDDTNKNNVEFDVYSFGVILFELLTGKQGSDENVKSVRRLVKERRGEEALDSRLRLAAGESVNEMVESLRIGYFCTAETPVKRPTMQQVLGLLKDIRTVSR.

The signal sequence occupies residues Met1–Ser17. The Extracellular portion of the chain corresponds to Asp18–Leu297. Residues Asn27, Asn45, Asn52, Asn68, Asn78, Asn89, Asn110, Asn126, Asn137, Asn148, Asn154, Asn189, Asn212, Asn229, and Asn261 are each glycosylated (N-linked (GlcNAc...) asparagine). 7 LRR repeats span residues Leu79–Met103, Gly105–Gly127, Leu130–Phe152, Thr153–Gly177, Leu178–Gly197, Leu198–His224, and Gln226–Lys246. Residues Val298 to Ile318 traverse the membrane as a helical segment. The tract at residues Leu319–Asn337 is calmodulin binding. At Leu319–Arg666 the chain is on the cytoplasmic side. Residues Phe395–Ile661 form the Protein kinase domain. Residues Ile401–Leu409 and Lys423 contribute to the ATP site.

Belongs to the protein kinase superfamily. Ser/Thr protein kinase family. Binds calmodulin (CaM) in a calcium-dependent manner. Interacts with CAM1, but not with CAM8. It depends on Mn(2+) as a cofactor. Requires Mg(2+) as cofactor. In terms of processing, calmodulin (CaM)-independent autophosphorylation. Expressed in reproductive and vegetative tissues, with higher levels in seedlings and flowers, but not in leaves.

It localises to the cell membrane. The catalysed reaction is L-seryl-[protein] + ATP = O-phospho-L-seryl-[protein] + ADP + H(+). It carries out the reaction L-threonyl-[protein] + ATP = O-phospho-L-threonyl-[protein] + ADP + H(+). With respect to regulation, not stimulated by calmodulin (CaM). In terms of biological role, can phosphorylate the myelin basic protein in vitro. Required for endosperm development in embryos. Maybe involved in auxin and osmotic stress responses. The chain is Calmodulin-binding receptor kinase CaMRLK from Arabidopsis thaliana (Mouse-ear cress).